The primary structure comprises 207 residues: Ribonuclease HII (207 aa).

The 189-residue stretch at 18 to 206 folds into the RNase H type-2 domain; that stretch reads EFIVGVDEVG…VKNILQLLEK (189 aa). A divalent metal cation contacts are provided by aspartate 24, glutamate 25, and aspartate 115.

This sequence belongs to the RNase HII family. It depends on Mn(2+) as a cofactor. Requires Mg(2+) as cofactor.

It is found in the cytoplasm. The enzyme catalyses Endonucleolytic cleavage to 5'-phosphomonoester.. Endonuclease that specifically degrades the RNA of RNA-DNA hybrids. The protein is Ribonuclease HII of Hydrogenovibrio crunogenus (strain DSM 25203 / XCL-2) (Thiomicrospira crunogena).